Reading from the N-terminus, the 432-residue chain is Killer cell immunoglobulin-like receptor 3DL1 (432 aa).

Residues 1 to 21 form the signal peptide; that stretch reads MLLWFLSLVCSGFFLVQRMSA. Residues 22–335 lie on the Extracellular side of the membrane; that stretch reads HVGSHDKPFL…ADTKTNNYKN (314 aa). 3 consecutive Ig-like C2-type domains span residues 42–100, 135–202, and 238–301; these read GQNV…HPQY, GGNV…NSYY, and GETM…FRNA. Residue N44 is glycosylated (N-linked (GlcNAc...) asparagine). C49 and C95 are disulfide-bonded. N-linked (GlcNAc...) asparagine glycosylation is present at N137. 2 disulfides stabilise this stretch: C142–C195 and C245–C294. N-linked (GlcNAc...) asparagine glycosylation is present at N300. The helical transmembrane segment at 336-356 threads the bilayer; that stretch reads LHILTGLLVTMVLVVIIIFYS. Over 357-432 the chain is Cytoplasmic; the sequence is CYFSKQNKSQ…DTIVYMEIMK (76 aa).

The protein belongs to the immunoglobulin superfamily.

Its subcellular location is the cell membrane. In terms of biological role, receptor on natural killer (NK) cells. Inhibits the activity of NK cells thus preventing cell lysis. This is Killer cell immunoglobulin-like receptor 3DL1 (Kir3dl1) from Mus musculus (Mouse).